The primary structure comprises 130 residues: MPTKSFHRTDRVSAQVRRDLGTIVHAAVRDNGLPSVSVSDVEISRDLAHAKVFVTALQQERSAEAVKGLKEIAGQLRTQLARAMKLRHVPELHFHYDDSVDRGERIDNLLRDLDDVGPEATSSDEDAEQR.

Positions 111–130 are disordered; it reads RDLDDVGPEATSSDEDAEQR.

It belongs to the RbfA family. Monomer. Binds 30S ribosomal subunits, but not 50S ribosomal subunits or 70S ribosomes.

Its subcellular location is the cytoplasm. Functionally, one of several proteins that assist in the late maturation steps of the functional core of the 30S ribosomal subunit. Associates with free 30S ribosomal subunits (but not with 30S subunits that are part of 70S ribosomes or polysomes). Required for efficient processing of 16S rRNA. May interact with the 5'-terminal helix region of 16S rRNA. The sequence is that of Ribosome-binding factor A from Xanthomonas axonopodis pv. citri (strain 306).